The following is a 545-amino-acid chain: Thermosome subunit alpha (545 aa).

Positions 522–545 (KKSTPPSGQGGQGQGMPGGGMPEY) are disordered. A compositionally biased stretch (gly residues) spans 529 to 545 (GQGGQGQGMPGGGMPEY).

Belongs to the TCP-1 chaperonin family. Forms a Heterooligomeric complex of two stacked eight-membered rings. Post-translationally, the N-terminus is blocked.

In terms of biological role, molecular chaperone; binds unfolded polypeptides in vitro, and has a weak ATPase activity. This is Thermosome subunit alpha (thsA) from Thermoplasma acidophilum (strain ATCC 25905 / DSM 1728 / JCM 9062 / NBRC 15155 / AMRC-C165).